The primary structure comprises 277 residues: Large ribosomal subunit protein uL2 (277 aa).

The tract at residues 226–277 (MNPVDHPHGGGEGRSPIGMPSPVTPWGKPTLGYKTRKPNKKSDRLIVSRRKK) is disordered.

This sequence belongs to the universal ribosomal protein uL2 family. In terms of assembly, part of the 50S ribosomal subunit. Forms a bridge to the 30S subunit in the 70S ribosome.

One of the primary rRNA binding proteins. Required for association of the 30S and 50S subunits to form the 70S ribosome, for tRNA binding and peptide bond formation. It has been suggested to have peptidyltransferase activity; this is somewhat controversial. Makes several contacts with the 16S rRNA in the 70S ribosome. In Symbiobacterium thermophilum (strain DSM 24528 / JCM 14929 / IAM 14863 / T), this protein is Large ribosomal subunit protein uL2.